A 93-amino-acid polypeptide reads, in one-letter code: Neutrophil cationic peptide 1 type B (93 aa).

The first 19 residues, 1 to 19, serve as a signal peptide directing secretion; sequence MRTVPLFAACLLLTLMAQA. Positions 20–62 are excised as a propeptide; that stretch reads EPLPRAADHSDTKMKGDREDHVAVISFWEEESTSLQDAGAGAG. Intrachain disulfides connect C65–C93, C67–C82, and C72–C92.

Belongs to the alpha-defensin family. In terms of tissue distribution, bone marrow.

Its subcellular location is the secreted. In terms of biological role, has antibiotic, anti-fungi and antiviral activity. The sequence is that of Neutrophil cationic peptide 1 type B from Cavia porcellus (Guinea pig).